Reading from the N-terminus, the 2136-residue chain is Methylcytosine dioxygenase TET1 (2136 aa).

2 stretches are compositionally biased toward basic residues: residues 1–12 (MSRSRHARPSRL) and 20–31 (KKKKNSQLRKTT). Residues 1 to 47 (MSRSRHARPSRLVRKEDVNKKKKNSQLRKTTKGANKNVASVKTLSPG) are disordered. Positions 32 to 43 (KGANKNVASVKT) are enriched in polar residues. Positions 528–674 (LGIAQLSQAG…NGPKSESMDY (147 aa)) are sufficient for binding to genomic CpG islands. The CXXC-type zinc-finger motif lies at 584–625 (EKKKRKRCGVCEPCQQKTNCGECTYCKNRKNSHQICKKRKCE). Cys591, Cys594, Cys597, Cys603, Cys606, Cys609, Cys619, and Cys624 together coordinate Zn(2+). Composition is skewed to basic and acidic residues over residues 712 to 724 (QNKK…HVKG), 732 to 743 (EAEKSKNSEVDK), and 849 to 869 (IHNE…EPKD). Disordered regions lie at residues 712 to 746 (QNKK…KKRT), 849 to 876 (IHNE…VQPS), 899 to 923 (QLSE…EQRT), and 1119 to 1169 (EKGT…VSYQ). Ser871 is subject to Phosphoserine. The segment covering 901 to 911 (SEAPSENSSPS) has biased composition (low complexity). Residues 1119 to 1139 (EKGTIQQKPPSSVHNNHGSSL) show a composition bias toward polar residues. Positions 1146–1163 (TQKKTKSTPSRDRRKKKP) are enriched in basic residues. Cys1422, Cys1424, Cys1482, His1508, and Cys1510 together coordinate Zn(2+). Arg1551 contributes to the 2-oxoglutarate binding site. Zn(2+) contacts are provided by Cys1561, Cys1563, Cys1579, and Cys1588. The interaction with DNA stretch occupies residues 1580–1593 (SWSMYFNGCKFGRS). Lys1589 participates in a covalent cross-link: Glycyl lysine isopeptide (Lys-Gly) (interchain with G-Cter in ubiquitin). Cys1648 is a Zn(2+) binding site. Cys1664 provides a ligand contact to 2-oxoglutarate. Zn(2+) is bound at residue His1670. Residues His1672 and Asp1674 each coordinate Fe cation. Asn1677 contributes to the substrate binding site. His1706 is a binding site for 2-oxoglutarate. Disordered stretches follow at residues 1774–1897 (EKKP…AAAD) and 1919–1984 (EPLI…SPAE). Positions 1786–1800 (NSTTTNNSKPSSLPT) are enriched in low complexity. Polar residues-rich tracts occupy residues 1824 to 1833 (SSDNTKTYSL) and 1937 to 1953 (HQPN…QDLA). Acidic residues predominate over residues 1957-1976 (MEEDEQHSEADEPPSDEPLS). His2028 is a Fe cation binding site. 2043-2045 (RLS) lines the 2-oxoglutarate pocket. A substrate-binding site is contributed by 2049–2051 (YQH). His2059 is a Zn(2+) binding site. Basic and acidic residues predominate over residues 2074-2087 (KNKKMKASEQKDQA). The disordered stretch occupies residues 2074–2100 (KNKKMKASEQKDQAANEGPEQSSEVNE).

The protein belongs to the TET family. Interacts with SIN3A; recruits the transcriptional corepressor SIN3A to gene promoters. Interacts with HCFC1. Interacts (via C-terminus) with OGT. Found in a complex composed of at least SINHCAF, SIN3A, HDAC1, SAP30, RBBP4, OGT and TET1. Interacts with QSER1. Interacts with NONO (via DNA-binding domain); this interaction recruits TET1 to genomic loci. Interacts with FOXA2; this interaction may recruit TET1 to specific enhancers to preserve their unmethylated status and hence allowing gene expression. Interacts with RNF2. Directly interacts (via C-terminus) with the DCAF1 component of the CRL4(VprBP) E3 ubiquitin-protein ligase complex. As to quaternary structure, interacts with UHRF1; this interaction induces the recruitment of TET1 to replicating heterochromatin. Interacts with DCAF1. The cofactor is Fe(2+). It depends on Zn(2+) as a cofactor. Post-translationally, glycosylated. Interaction with OGT leads to GlcNAcylation. Monoubiquitinated at Lys-1589 by the DCX (DDB1-CUL4-X-box) E3 ubiquitin-protein ligase complex called CRL4(VprBP) or CUL4A-RBX1-DDB1-DCAF1/VPRBP complex; this modification promotes binding to DNA. Expressed in fetal heart, lung and brain, and in adult skeletal muscle, thymus and ovary. Not detected in adult heart, lung or brain. Up-regulated in glioblastoma cells (at protein level). In terms of tissue distribution, expressed in embryonic stem cells (at protein level).

It localises to the nucleus. It is found in the chromosome. The enzyme catalyses a 5-methyl-2'-deoxycytidine in DNA + 2-oxoglutarate + O2 = a 5-hydroxymethyl-2'-deoxycytidine in DNA + succinate + CO2. The catalysed reaction is a 5-hydroxymethyl-2'-deoxycytidine in DNA + 2-oxoglutarate + O2 = a 5-formyl-2'-deoxycytidine in DNA + succinate + CO2 + H2O. It catalyses the reaction a 5-formyl-2'-deoxycytidine in DNA + 2-oxoglutarate + O2 = a 5-carboxyl-2'-deoxycytidine in DNA + succinate + CO2 + H(+). In terms of biological role, dioxygenase that plays a key role in active DNA demethylation, by catalyzing the sequential oxidation of the modified genomic base 5-methylcytosine (5mC) into 5-hydroxymethylcytosine (5hmC), 5-formylcytosine (5fC), and 5-carboxylcytosine (5caC). In addition to its role in DNA demethylation, plays a more general role in chromatin regulation by recruiting histone modifying protein complexes to alter histone marks and chromatin accessibility, leading to both activation and repression of gene expression. Plays therefore a role in many biological processes, including stem cell maintenance, T- and B-cell development, inflammation regulation, genomic imprinting, neural activity or DNA repair. Involved in the balance between pluripotency and lineage commitment of cells and plays a role in embryonic stem cells maintenance and inner cell mass cell specification. Together with QSER1, plays an essential role in the protection and maintenance of transcriptional and developmental programs to inhibit the binding of DNMT3A/3B and therefore de novo methylation. May play a role in pancreatic beta-cell specification during development. In this context, may function as an upstream epigenetic regulator of PAX4 presumably through direct recruitment by FOXA2 to a PAX4 enhancer to preserve its unmethylated status, thereby potentiating PAX4 expression to adopt beta-cell fate during endocrine lineage commitment. Under DNA hypomethylation conditions, such as in female meiotic germ cells, may induce epigenetic reprogramming of pericentromeric heterochromatin (PCH), the constitutive heterochromatin of pericentromeric regions. PCH forms chromocenters in the interphase nucleus and chromocenters cluster at the prophase of meiosis. In this context, may also be essential for chromocenter clustering in a catalytic activity-independent manner, possibly through the recruitment polycomb repressive complex 1 (PRC1) to the chromocenters. During embryonic development, may be required for normal meiotic progression in oocytes and meiotic gene activation. Binds preferentially to DNA containing cytidine-phosphate-guanosine (CpG) dinucleotides over CpH (H=A, T, and C), hemimethylated-CpG and hemimethylated-hydroxymethyl-CpG. Dioxygenase that plays a key role in active DNA demethylation. Binds to promoters, particularly to those with high CG content. In hippocampal neurons, isoform 1 regulates the expression of a unique subset of genes compared to isoform 2, although some overlap exists between both isoforms, hence differentially regulates excitatory synaptic transmission. In hippocampal neuron cell cultures, isoform 1 controls both miniature excitatory postsynaptic current amplitude and frequency. Isoform 1 may regulate genes involved in hippocampal-dependent memory, leading to positive regulation of memory, contrary to isoform 2 that may decrease memory. Functionally, dioxygenase that plays a key role in active DNA demethylation. As isoform 1, binds to promoters, particularly to those with high CG content, however displays reduced global chromatin affinity compared with isoform 1, leading to decreased global DNA demethylation compared with isoform 1. Contrary to isoform 1, isoform 2 localizes during S phase to sites of ongoing DNA replication in heterochromatin, causing a significant de novo 5hmC formation, globally, and more so in heterochromatin, including LINE 1 interspersed DNA repeats leading to their activation. In hippocampal neurons, isoform 2 regulates the expression of a unique subset of genes compared to isoform 1, although some overlap between both isoforms, hence differentially regulates excitatory synaptic transmission. In hippocampal neuron cell cultures, isoform 2 controls miniature excitatory postsynaptic current frequency, but not amplitude. Isoform 2 may regulate genes involved in hippocampal-dependent memory, leading to negative regulation of memory, contrary to isoform 1 that may improve memory. In immature and partially differentiated gonadotrope cells, directly represses luteinizing hormone gene LHB expression and does not catalyze 5hmC at the gene promoter. In Homo sapiens (Human), this protein is Methylcytosine dioxygenase TET1.